The chain runs to 577 residues: Proline--tRNA ligase (577 aa).

This sequence belongs to the class-II aminoacyl-tRNA synthetase family. ProS type 1 subfamily. Homodimer.

The protein resides in the cytoplasm. It catalyses the reaction tRNA(Pro) + L-proline + ATP = L-prolyl-tRNA(Pro) + AMP + diphosphate. In terms of biological role, catalyzes the attachment of proline to tRNA(Pro) in a two-step reaction: proline is first activated by ATP to form Pro-AMP and then transferred to the acceptor end of tRNA(Pro). As ProRS can inadvertently accommodate and process non-cognate amino acids such as alanine and cysteine, to avoid such errors it has two additional distinct editing activities against alanine. One activity is designated as 'pretransfer' editing and involves the tRNA(Pro)-independent hydrolysis of activated Ala-AMP. The other activity is designated 'posttransfer' editing and involves deacylation of mischarged Ala-tRNA(Pro). The misacylated Cys-tRNA(Pro) is not edited by ProRS. The protein is Proline--tRNA ligase of Helicobacter pylori (strain Shi470).